We begin with the raw amino-acid sequence, 522 residues long: GMP synthase [glutamine-hydrolyzing] (522 aa).

The Glutamine amidotransferase type-1 domain maps to 5 to 204; the sequence is YILIIDFGSQ…VKNICNYTNV (200 aa). Cysteine 82 (nucleophile) is an active-site residue. Active-site residues include histidine 178 and glutamate 180. The region spanning 205–397 is the GMPS ATP-PPase domain; that stretch reads IKYSLSIRKI…IGIPKEIIFR (193 aa). 232-238 lines the ATP pocket; that stretch reads SGGIDSF.

In terms of assembly, homodimer.

It catalyses the reaction XMP + L-glutamine + ATP + H2O = GMP + L-glutamate + AMP + diphosphate + 2 H(+). It functions in the pathway purine metabolism; GMP biosynthesis; GMP from XMP (L-Gln route): step 1/1. In terms of biological role, catalyzes the synthesis of GMP from XMP. This chain is GMP synthase [glutamine-hydrolyzing], found in Wigglesworthia glossinidia brevipalpis.